The chain runs to 154 residues: Large ribosomal subunit protein uL22c (154 aa).

This sequence belongs to the universal ribosomal protein uL22 family. Part of the 50S ribosomal subunit.

The protein resides in the plastid. The protein localises to the chloroplast. This protein binds specifically to 23S rRNA. Functionally, the globular domain of the protein is located near the polypeptide exit tunnel on the outside of the subunit, while an extended beta-hairpin is found that lines the wall of the exit tunnel in the center of the 70S ribosome. This Guizotia abyssinica (Niger) protein is Large ribosomal subunit protein uL22c (rpl22).